Here is a 480-residue protein sequence, read N- to C-terminus: Selenium-binding protein 3 (480 aa).

Selenite is bound by residues Cys-12 and Cys-13.

Belongs to the selenium-binding protein family. As to expression, expressed in young seedlings, mostly in roots.

The protein is Selenium-binding protein 3 (SBP3) of Arabidopsis thaliana (Mouse-ear cress).